The following is a 443-amino-acid chain: MTTRQPLYKSLYFQVIVAIAIGILLGHFYPQTGVALKPLGDGFIKLIKMVIAPIIFCTVVSGIAGMQNMKSVGKTGGYALLYFEIVSTIALLIGLIVVNVVQPGAGMHIDASTLDASKVAAYVTAGNDQSIVGFILNIIPATIVGAFANGDILQVLMFSVVFGFALHRLGAYGKPVLDFIDRFAHVMFNIINMIMKLAPLGALGAMAFTIGAYGVGSLVQLGQLMICFYITCVVFVLVVLGAICRAHGFSVIKLIRYIREELLIVLGTSSSESALPRMLIKMERLGAKKSVVGLVIPTGYSFNLDGTSIYLTMAAVFIAQATDTHMDITHQITLLLVLLLSSKGAAGVTGSGFIVLAATLSAVGHLPVAGLALILGIDRFMSEARALTNLVGNAVATVVVAKWVKELDEDKLQSELASGGRPITDTRETDDLGVAEGPAPSIK.

10 helical membrane-spanning segments follow: residues 10 to 30 (SLYFQVIVAIAIGILLGHFYP), 46 to 66 (LIKMVIAPIIFCTVVSGIAGM), 78 to 98 (YALLYFEIVSTIALLIGLIVV), 130 to 150 (SIVGFILNIIPATIVGAFANG), 152 to 172 (ILQVLMFSVVFGFALHRLGAY), 199 to 219 (PLGALGAMAFTIGAYGVGSLV), 224 to 244 (LMICFYITCVVFVLVVLGAIC), 291 to 311 (VVGLVIPTGYSFNLDGTSIYL), 332 to 352 (ITLLLVLLLSSKGAAGVTGSG), and 354 to 374 (IVLAATLSAVGHLPVAGLALI). The segment at 415-443 (ELASGGRPITDTRETDDLGVAEGPAPSIK) is disordered.

The protein belongs to the dicarboxylate/amino acid:cation symporter (DAACS) (TC 2.A.23) family.

It localises to the cell inner membrane. Its function is as follows. Responsible for the transport of dicarboxylates such as succinate, fumarate, and malate from the periplasm across the membrane. This chain is C4-dicarboxylate transport protein, found in Pseudomonas fluorescens (strain ATCC BAA-477 / NRRL B-23932 / Pf-5).